Consider the following 240-residue polypeptide: Mitochondrial inner membrane protease ATP23 (240 aa).

A divalent metal cation is bound at residue His-140. Glu-141 is a catalytic residue. An a divalent metal cation-binding site is contributed by His-144.

Belongs to the peptidase M76 family.

The protein resides in the mitochondrion inner membrane. In terms of biological role, has a dual role in the assembly of mitochondrial ATPase. Acts as a protease that removes N-terminal residues of mitochondrial ATPase CF(0) subunit 6 at the intermembrane space side. Also involved in the correct assembly of the membrane-embedded ATPase CF(0) particle, probably mediating association of subunit 6 with the subunit 9 ring. This is Mitochondrial inner membrane protease ATP23 (ATP23) from Scheffersomyces stipitis (strain ATCC 58785 / CBS 6054 / NBRC 10063 / NRRL Y-11545) (Yeast).